The primary structure comprises 374 residues: Queuine tRNA-ribosyltransferase (374 aa).

Catalysis depends on Asp-95, which acts as the Proton acceptor. Residues Asp-95 to Phe-99, Asp-149, Gln-191, and Gly-218 contribute to the substrate site. Residues Gly-249–Glu-255 form an RNA binding region. Asp-268 acts as the Nucleophile in catalysis. The interval Thr-273 to Arg-277 is RNA binding; important for wobble base 34 recognition. Zn(2+) contacts are provided by Cys-306, Cys-308, Cys-311, and His-337.

This sequence belongs to the queuine tRNA-ribosyltransferase family. As to quaternary structure, homodimer. Within each dimer, one monomer is responsible for RNA recognition and catalysis, while the other monomer binds to the replacement base PreQ1. It depends on Zn(2+) as a cofactor.

It carries out the reaction 7-aminomethyl-7-carbaguanine + guanosine(34) in tRNA = 7-aminomethyl-7-carbaguanosine(34) in tRNA + guanine. The protein operates within tRNA modification; tRNA-queuosine biosynthesis. Catalyzes the base-exchange of a guanine (G) residue with the queuine precursor 7-aminomethyl-7-deazaguanine (PreQ1) at position 34 (anticodon wobble position) in tRNAs with GU(N) anticodons (tRNA-Asp, -Asn, -His and -Tyr). Catalysis occurs through a double-displacement mechanism. The nucleophile active site attacks the C1' of nucleotide 34 to detach the guanine base from the RNA, forming a covalent enzyme-RNA intermediate. The proton acceptor active site deprotonates the incoming PreQ1, allowing a nucleophilic attack on the C1' of the ribose to form the product. After dissociation, two additional enzymatic reactions on the tRNA convert PreQ1 to queuine (Q), resulting in the hypermodified nucleoside queuosine (7-(((4,5-cis-dihydroxy-2-cyclopenten-1-yl)amino)methyl)-7-deazaguanosine). This chain is Queuine tRNA-ribosyltransferase, found in Nostoc sp. (strain PCC 7120 / SAG 25.82 / UTEX 2576).